A 206-amino-acid polypeptide reads, in one-letter code: Putative archaetidylserine decarboxylase proenzyme (206 aa).

Serine 172 (schiff-base intermediate with substrate; via pyruvic acid) is an active-site residue. The residue at position 172 (serine 172) is a Pyruvic acid (Ser); by autocatalysis.

It belongs to the phosphatidylserine decarboxylase family. PSD-A subfamily. In terms of assembly, heterodimer of a large membrane-associated beta subunit and a small pyruvoyl-containing alpha subunit. Pyruvate serves as cofactor. Post-translationally, is synthesized initially as an inactive proenzyme. Formation of the active enzyme involves a self-maturation process in which the active site pyruvoyl group is generated from an internal serine residue via an autocatalytic post-translational modification. Two non-identical subunits are generated from the proenzyme in this reaction, and the pyruvate is formed at the N-terminus of the alpha chain, which is derived from the carboxyl end of the proenzyme. The post-translation cleavage follows an unusual pathway, termed non-hydrolytic serinolysis, in which the side chain hydroxyl group of the serine supplies its oxygen atom to form the C-terminus of the beta chain, while the remainder of the serine residue undergoes an oxidative deamination to produce ammonia and the pyruvoyl prosthetic group on the alpha chain.

It localises to the cell membrane. The enzyme catalyses archaetidylserine + H(+) = archaetidylethanolamine + CO2. Catalyzes the formation of archaetidylethanolamine (PtdEtn) from archaetidylserine (PtdSer). The protein is Putative archaetidylserine decarboxylase proenzyme of Methanocaldococcus jannaschii (strain ATCC 43067 / DSM 2661 / JAL-1 / JCM 10045 / NBRC 100440) (Methanococcus jannaschii).